The chain runs to 78 residues: D-alanyl carrier protein (78 aa).

Positions methionine 1 to lysine 78 constitute a Carrier domain. Serine 36 carries the post-translational modification O-(pantetheine 4'-phosphoryl)serine.

Belongs to the DltC family. Post-translationally, 4'-phosphopantetheine is transferred from CoA to a specific serine of apo-DCP.

Its subcellular location is the cytoplasm. It participates in cell wall biogenesis; lipoteichoic acid biosynthesis. Carrier protein involved in the D-alanylation of lipoteichoic acid (LTA). The loading of thioester-linked D-alanine onto DltC is catalyzed by D-alanine--D-alanyl carrier protein ligase DltA. The DltC-carried D-alanyl group is further transferred to cell membrane phosphatidylglycerol (PG) by forming an ester bond, probably catalyzed by DltD. D-alanylation of LTA plays an important role in modulating the properties of the cell wall in Gram-positive bacteria, influencing the net charge of the cell wall. This Bacillus pumilus (strain SAFR-032) protein is D-alanyl carrier protein.